The primary structure comprises 145 residues: AP-2 complex subunit sigma (145 aa).

It belongs to the adaptor complexes small subunit family. In terms of assembly, adaptor protein complex 2 (AP-2) is a heterotetramer composed of two large adaptins (alpha-type subunit apl3 and beta-type subunit apl1), a medium chain (mu-type subunit apm4) and a small adaptin (sigma-type subunit aps2).

The protein resides in the cell membrane. The protein localises to the membrane. It is found in the coated pit. In terms of biological role, component of the adaptor complexes which link clathrin to receptors in coated vesicles. Clathrin-associated protein complexes are believed to interact with the cytoplasmic tails of membrane proteins, leading to their selection and concentration. In Emericella nidulans (strain FGSC A4 / ATCC 38163 / CBS 112.46 / NRRL 194 / M139) (Aspergillus nidulans), this protein is AP-2 complex subunit sigma (aps2).